Consider the following 201-residue polypeptide: Glutathione peroxidase 1, mitochondrial (201 aa).

The transit peptide at 1–27 directs the protein to the mitochondrion; that stretch reads MLLTRKNVAVRPARAARRDVRAMSLLG. U75 is a catalytic residue. Position 75 (U75) is a non-standard amino acid, selenocysteine.

Its subcellular location is the mitochondrion. The catalysed reaction is 2 glutathione + H2O2 = glutathione disulfide + 2 H2O. In terms of biological role, may constitute a glutathione peroxidase-like protective system against oxidative stresses. Hydrogen peroxide, tert-butyl hydroperoxide and cumene, but not phosphatidylcholine hydroperoxide, can act as acceptors. The chain is Glutathione peroxidase 1, mitochondrial from Chlamydomonas reinhardtii (Chlamydomonas smithii).